The chain runs to 160 residues: SsrA-binding protein (160 aa).

The disordered stretch occupies residues 131-160 (KKEYDKRDTERERDAGRELQRAVRNKGKED).

This sequence belongs to the SmpB family.

The protein localises to the cytoplasm. Its function is as follows. Required for rescue of stalled ribosomes mediated by trans-translation. Binds to transfer-messenger RNA (tmRNA), required for stable association of tmRNA with ribosomes. tmRNA and SmpB together mimic tRNA shape, replacing the anticodon stem-loop with SmpB. tmRNA is encoded by the ssrA gene; the 2 termini fold to resemble tRNA(Ala) and it encodes a 'tag peptide', a short internal open reading frame. During trans-translation Ala-aminoacylated tmRNA acts like a tRNA, entering the A-site of stalled ribosomes, displacing the stalled mRNA. The ribosome then switches to translate the ORF on the tmRNA; the nascent peptide is terminated with the 'tag peptide' encoded by the tmRNA and targeted for degradation. The ribosome is freed to recommence translation, which seems to be the essential function of trans-translation. The sequence is that of SsrA-binding protein from Pseudomonas fluorescens (strain Pf0-1).